The primary structure comprises 431 residues: uncharacterized protein (431 aa).

Disordered stretches follow at residues 17 to 66 and 81 to 415; these read VDPE…GQQA and GSVT…ALPR. The segment covering 91 to 106 has biased composition (basic and acidic residues); that stretch reads DKADREPAARPRDPRS. Positions 173–195 are enriched in basic residues; that stretch reads TYRRRRPTAATPSRKKKARRGPK. The segment covering 235 to 244 has biased composition (low complexity); that stretch reads RTPGPVHSAA. The segment covering 299 to 312 has biased composition (gly residues); sequence RMGGSSGGRGGTPG. The segment covering 317–342 has biased composition (low complexity); that stretch reads RAAPGARPTAPDGAPGRWDGPADGPA. A compositionally biased stretch (gly residues) spans 343-360; sequence PGLGRGGWGVGREAGGSG.

This is an uncharacterized protein from Homo sapiens (Human).